Reading from the N-terminus, the 370-residue chain is Peridinin-chlorophyll a-binding protein 1, chloroplastic (370 aa).

The N-terminal 57 residues, 1-57 (MVRSGKKAVVLAAVAFCATSVVQKSHGFVPSPLRQRAAAAGAAAASAATMFAPAAFA), are a transit peptide targeting the chloroplast. 2 tandem repeats follow at residues 58-220 (DEIG…VPSG) and 221-370 (DKIG…AAQR).

As to quaternary structure, homotrimer.

The protein resides in the plastid. It localises to the chloroplast. In terms of biological role, water-soluble antenna for capture of solar energy in the blue-green range. Peridinin is an asymmetric carotenoid. The polypeptide is Peridinin-chlorophyll a-binding protein 1, chloroplastic (Amphidinium carterae (Dinoflagellate)).